Reading from the N-terminus, the 2682-residue chain is 3-methylorcinaldehyde synthase (2682 aa).

The interval 111–272 (LIPLVVIEQL…TEITLYGAFH (162 aa)) is N-terminal acylcarrier protein transacylase domain (SAT). The Nucleophile; for transacylase activity role is filled by C154. H272 acts as the Proton donor/acceptor; for transacylase activity in catalysis. Residues 401–826 (ESDIAVIGMA…GSNASMIVMQ (426 aa)) form the Ketosynthase family 3 (KS3) domain. Active-site for beta-ketoacyl synthase activity residues include C573, H708, and H749. A malonyl-CoA:ACP transacylase (MAT) domain region spans residues 947 to 1237 (FGGQVSTHIG…ITAMTSRALD (291 aa)). The tract at residues 1339-1468 (LTFVGFQDSS…GKIKFTNARD (130 aa)) is N-terminal hotdog fold. The PKS/mFAS DH domain maps to 1339-1651 (LTFVGFQDSS…YVKIPKLSMQ (313 aa)). The segment at 1367-1649 (LLLGHMTIQT…IAYVKIPKLS (283 aa)) is product template (PT) domain. H1371 serves as the catalytic Proton acceptor; for dehydratase activity. The C-terminal hotdog fold stretch occupies residues 1496 to 1651 (VDEVLANRSI…YVKIPKLSMQ (156 aa)). The Proton donor; for dehydratase activity role is filled by D1555. The Carrier domain occupies 1723-1797 (ENITERVKAV…DLMKVVTGVV (75 aa)). S1757 carries the O-(pantetheine 4'-phosphoryl)serine modification. Positions 2021–2211 (EWPLNQVMYT…AGYGHVYWTE (191 aa)) are methyltransferase domain. The interval 2303–2548 (VTGATGGLGA…LGWTPADAIA (246 aa)) is NADPH-binding (R) domain.

It functions in the pathway secondary metabolite biosynthesis; terpenoid biosynthesis. In terms of biological role, non-reducing polyketide synthase; part of the gene cluster that mediates the biosynthesis of eupenifeldin, a bistropolone meroterpenoid that acts as an antitumor agent. The first step of eupenifeldin biosynthesis is the biosynthesis of 3-methylorcinaldehyde performed by the non-reducing polyketide synthase eupA. Oxidative dearomatization of 3-methylorcinaldehyde likely catalyzed by the FAD-dependent monooxygenase eupB is followed by oxidative ring expansion by the 2-oxoglutarate-dependent dioxygenase eupC to provide the first tropolone metabolite, tropolone stipitaldehyde. In parallel, generation of sesquiterpene alpha-humulene from farnesylpyrophosphate (FPP) is catalyzed by the terpene cyclase eupE. The cytochrome P450 monooxygenase eupD then hydroxylates humulene to humulenol. The putative Diels-Alderase eupF probably catalyzes the formation of the tropolone-humulene skeleton by linking humulenol and the polyketide moiety. The short-chain dehydrogenase/reductase eupG and the flavin-dependent monooxygenase eupH are also essential for eupenifeldin biosynthesis and are likely the additional decorating enzymes of the tropolone-humulene skeleton to produce final eupenifeldin or derivatives. This Phoma sp protein is 3-methylorcinaldehyde synthase.